The following is a 481-amino-acid chain: ATP synthase subunit beta, chloroplastic (481 aa).

ATP is bound at residue 162 to 169; that stretch reads GGAGVGKT.

The protein belongs to the ATPase alpha/beta chains family. In terms of assembly, F-type ATPases have 2 components, CF(1) - the catalytic core - and CF(0) - the membrane proton channel. CF(1) has five subunits: alpha(3), beta(3), gamma(1), delta(1), epsilon(1). CF(0) has four main subunits: a(1), b(1), b'(1) and c(9-12).

It is found in the plastid. The protein resides in the chloroplast thylakoid membrane. It carries out the reaction ATP + H2O + 4 H(+)(in) = ADP + phosphate + 5 H(+)(out). Functionally, produces ATP from ADP in the presence of a proton gradient across the membrane. The catalytic sites are hosted primarily by the beta subunits. This is ATP synthase subunit beta, chloroplastic from Oltmannsiellopsis viridis (Marine flagellate).